The sequence spans 353 residues: MAMTLLEDWCRGMDVNSQRALLVWGIPVNCDETEIEETLQAAMPQVSYRVLGRMFWREENAKAALLELTGAVDYSLIPREMPGKGGLWKVVFKPPTSDAVFLERLHLFLAREGWTVQDVARVLGFQNPAPAPGPEMPAEMLNYILDNVIQPLVESIWYKKLTLFSGKDIPGPGEETFDSWLEHSNEIIEEWQVSDIEKRRRLMESLRGPAADVIRILKTNNAAITTAECLKALEQVFGSVESSRDAQVRFLNTYQNPGEKLSSYVIRLEPLLQKVVDKGVIDKDNVNQARLEQVIAGANHSGALRRQLWLAGAEEGPAPNLFQLLVQIREEEAKKEEEEAEAALLQLGLEGHF.

The protein belongs to the PNMA family. Predominantly expressed in testis. Very low levels in the brain, including in the piriform cortex, hippocampus and some subcortical nuclei.

The protein localises to the nucleus. It localises to the nucleolus. The protein is Paraneoplastic antigen Ma1 homolog (Pnma1) of Mus musculus (Mouse).